Consider the following 106-residue polypeptide: Cytochrome c2 (106 aa).

4 residues coordinate heme c: Cys-19, Cys-22, His-23, and Met-84.

It belongs to the cytochrome c family. In terms of processing, binds 1 heme c group covalently per subunit.

In Rhodopila globiformis (Rhodopseudomonas globiformis), this protein is Cytochrome c2.